The primary structure comprises 543 residues: Zinc metalloproteinase (543 aa).

Residues 1–24 form the signal peptide; it reads MHPNYYLSPLAVAIALGIASPVKA. A propeptide spanning residues 25–207 is cleaved from the precursor; the sequence is ADPIPLQKSS…PFVQWDDVKT (183 aa). His377 contacts Zn(2+). Glu378 is a catalytic residue. Residues His381 and Glu401 each contribute to the Zn(2+) site. Residue His463 is the Proton donor of the active site.

It belongs to the peptidase M4 family. Zn(2+) is required as a cofactor.

The protein localises to the secreted. Functionally, cleaves collagen, gelatin, casein, alpha-1-antitrypsin, and bovine insulin. May play a role in the pathogenesis of legionnaires disease. The chain is Zinc metalloproteinase from Legionella pneumophila.